Reading from the N-terminus, the 504-residue chain is WD repeat-containing protein 55 homolog (504 aa).

The span at 32–49 (QEVVNESDSEIGEYDLGD) shows a compositional bias: acidic residues. The disordered stretch occupies residues 32-135 (QEVVNESDSE…NAFDMDEDDE (104 aa)). Positions 66-76 (DSISSDGSFNP) are enriched in polar residues. The span at 77-95 (NDEDSDTDSDDSMLDEPDE) shows a compositional bias: acidic residues. Polar residues predominate over residues 114-124 (SGSSNRNQDSD). WD repeat units follow at residues 158–197 (KLED…NKLL), 202–241 (VHAK…LKKL), 245–283 (AHDD…SIFE), 286–325 (EIED…LYVQ), 328–367 (PYEE…YHCD), and 412–451 (QHNM…DFGD). A disordered region spans residues 484–504 (AKEDNNDNENDDATAGPSNTT).

It belongs to the WD repeat WDR55 family.

In Drosophila willistoni (Fruit fly), this protein is WD repeat-containing protein 55 homolog.